The primary structure comprises 114 residues: UPF0342 protein SE_1526 (114 aa).

The protein belongs to the UPF0342 family.

The polypeptide is UPF0342 protein SE_1526 (Staphylococcus epidermidis (strain ATCC 12228 / FDA PCI 1200)).